The following is a 220-amino-acid chain: Transmembrane emp24 domain-containing protein 1 (220 aa).

An N-terminal signal peptide occupies residues 1–19 (MAWSSSFLFIVLPLAAAVA). At 20 to 187 (VQPQDTELTF…LQDSNLERVN (168 aa)) the chain is on the extracellular side. In terms of domain architecture, GOLD spans 36-118 (QECFYQTTLY…EKLVFFELIF (83 aa)). Residues 138-164 (ELLDIKLEDIKESIESVKSRLERSIQM) adopt a coiled-coil conformation. The helical transmembrane segment at 188–208 (FWSAINVGVLVTVAFLQVYML) threads the bilayer. Over 209–220 (KSLFDDKRKIRT) the chain is Cytoplasmic. Positions 211-212 (LF) match the COPII vesicle coat-binding motif. Positions 211 to 220 (LFDDKRKIRT) match the COPI vesicle coat-binding motif.

The protein belongs to the EMP24/GP25L family. Homodimer in endoplasmic reticulum, endoplasmic reticulum-Golgi intermediate compartment and cis-Golgi network. Interacts with IL1RL1. Interacts with RNF26; this interaction is important to modulate innate immune signaling through the cGAS-STING pathway.

Its subcellular location is the cell membrane. The protein resides in the endoplasmic reticulum membrane. It localises to the golgi apparatus. The protein localises to the cis-Golgi network membrane. It is found in the endoplasmic reticulum-Golgi intermediate compartment membrane. In terms of biological role, potential role in vesicular protein trafficking, mainly in the early secretory pathway. May act as a cargo receptor at the lumenal side for incorporation of secretory cargo molecules into transport vesicles and may be involved in vesicle coat formation at the cytoplasmic side. Plays a positive role in IL-33-mediated IL-8 and IL-6 production by interacting with interleukin-33 receptor IL1RL1. Plays also a role in the modulation of innate immune signaling through the cGAS-STING pathway by interacting with RNF26. This is Transmembrane emp24 domain-containing protein 1 (tmed1) from Xenopus tropicalis (Western clawed frog).